The primary structure comprises 257 residues: uncharacterized protein (257 aa).

Active-site charge relay system residues include serine 122 and histidine 236.

This sequence belongs to the peptidase S9B family.

This is an uncharacterized protein from Bacillus subtilis (strain 168).